Here is a 116-residue protein sequence, read N- to C-terminus: Large ribosomal subunit protein bL17 (116 aa).

Belongs to the bacterial ribosomal protein bL17 family. In terms of assembly, part of the 50S ribosomal subunit. Contacts protein L32.

This is Large ribosomal subunit protein bL17 from Fusobacterium nucleatum subsp. nucleatum (strain ATCC 25586 / DSM 15643 / BCRC 10681 / CIP 101130 / JCM 8532 / KCTC 2640 / LMG 13131 / VPI 4355).